The following is a 624-amino-acid chain: Chaperone protein HtpG (624 aa).

An a; substrate-binding region spans residues 1–336 (MNMKGQETRG…SNDLPLNVSR (336 aa)). Residues 337-552 (EILQDSRITQ…ADEMSTQMAK (216 aa)) are b. Residues 553–624 (LFAAAGQQAP…IRRMNQLLTA (72 aa)) are c.

It belongs to the heat shock protein 90 family. In terms of assembly, homodimer.

The protein resides in the cytoplasm. Molecular chaperone. Has ATPase activity. This is Chaperone protein HtpG from Yersinia pestis bv. Antiqua (strain Antiqua).